The chain runs to 424 residues: MPSLFAQSLAIIATLQATLGLATPVSAPDTVTGKHAGGYVNAVYFTNWGIYGRNYQPADLPASQISHVLYSFLNLSNNGTVYSGDSWADIDKHYPNDSWNDVGNNVYGCVKQLYLLKKANRNMKTMLSIGGWTWSTNFPAAASTAATRSNFAKSAVTIMKDWGFDGIDVDWEYPADDAQAANMVLLLQAVRDELDAYAAKFAQGYHFQLSIAAPAGPANYNKLHLGDLGKVLDYINLMAYDFSGSWSNSSAHNANLYANPGNLNATPFNTDDAVNDYIKGGVPASKIVLGMPIYGKSFQKTNGIGKPFSGVGDGSWENGIWDYKVLPKAGATVIYDDVAKGYYSYDNRTQELISYDTPDITKEKVTYLKSKGLGGSMFWEASADRQGPDSLIGTSSNKLGGPDTTENLLNYPDSKYDNMRKQMA.

The signal sequence occupies residues 1-22 (MPSLFAQSLAIIATLQATLGLA). One can recognise a GH18 domain in the interval 39 to 402 (YVNAVYFTNW…GTSSNKLGGP (364 aa)). N74, N78, and N96 each carry an N-linked (GlcNAc...) asparagine glycan. Chitin contacts are provided by residues 103-104 (GN) and 130-133 (GGWT). E172 acts as the Proton donor in catalysis. Residues Y173 and 238–241 (MAYD) contribute to the chitin site. N-linked (GlcNAc...) asparagine glycosylation is found at N248 and N347. W379 provides a ligand contact to chitin. The segment at 385-412 (RQGPDSLIGTSSNKLGGPDTTENLLNYP) is disordered. Residues 392–408 (IGTSSNKLGGPDTTENL) show a composition bias toward polar residues.

It belongs to the glycosyl hydrolase 18 family. Chitinase class V subfamily.

It localises to the secreted. It carries out the reaction Random endo-hydrolysis of N-acetyl-beta-D-glucosaminide (1-&gt;4)-beta-linkages in chitin and chitodextrins.. Secreted chitinase involved in the degradation of chitin, a component of the cell walls of fungi and exoskeletal elements of some animals (including worms and arthropods). Participates in the infection process and directly acts in the penetration process of the host cuticle. This is Endochitinase 1 (chit1) from Metarhizium robertsii (strain ARSEF 23 / ATCC MYA-3075) (Metarhizium anisopliae (strain ARSEF 23)).